A 282-amino-acid polypeptide reads, in one-letter code: Putative sugar uptake protein lp_2594 (282 aa).

10 helical membrane passes run isoleucine 2–glycine 21, methionine 31–phenylalanine 48, valine 53–leucine 75, methionine 90–tryptophan 112, isoleucine 119–alanine 136, phenylalanine 146–serine 163, leucine 176–tyrosine 194, threonine 209–alanine 226, asparagine 233–phenylalanine 252, and isoleucine 262–leucine 281.

The protein belongs to the GRP transporter (TC 2.A.7.5) family.

Its subcellular location is the cell membrane. The polypeptide is Putative sugar uptake protein lp_2594 (Lactiplantibacillus plantarum (strain ATCC BAA-793 / NCIMB 8826 / WCFS1) (Lactobacillus plantarum)).